The chain runs to 44 residues: Phosphatase RapA inhibitor (44 aa).

The propeptide occupies 1-39; sequence MKSKWMSGLLLVAVGFSFTQVMVHAGETANTEGKTFHIA.

It belongs to the Phr family. As to quaternary structure, interacts with RapA and inhibits its interaction with Spo0F. In terms of processing, secreted with a propeptide domain, which is cleaved in the cell wall by the secreted serine proteases subtilisin and Vpr to produce a mature signaling peptide. Contains a predicted signal peptide cleavage site in the N-terminal region, however the propeptide is probably subject to only one processing event, at the N-terminal end of the mature peptide.

The protein localises to the secreted. Its subcellular location is the cytoplasm. With respect to regulation, inhibition of RapA requires a free carboxylate group at the C-terminal end of the PhrA pentapeptide. A free C-terminal carboxylic acid PhrA pentapeptide inhibits RapA phosphatase activity at a 1:1 ratio and is approximately 200 fold more active than a C-terminal amide peptide. Signaling molecule involved in the regulation of sporulation. Secreted during production, but the mature peptide acts intracellularly, indicating that it needs to be imported into the cell to function. Inhibitor of the RapA phosphatase activity. Does not act on RapB. This Bacillus subtilis (strain 168) protein is Phosphatase RapA inhibitor.